A 97-amino-acid chain; its full sequence is Large ribosomal subunit protein eL21 (97 aa).

The segment at 1-23 (MTKMSKGPRSGSRRVMTKSVKNK) is disordered.

Belongs to the eukaryotic ribosomal protein eL21 family.

This chain is Large ribosomal subunit protein eL21, found in Picrophilus torridus (strain ATCC 700027 / DSM 9790 / JCM 10055 / NBRC 100828 / KAW 2/3).